A 468-amino-acid polypeptide reads, in one-letter code: Mitochondrial dynamics protein MID51 (468 aa).

Topologically, residues 1–29 (MAGVNGDRKGKKDDNGLGTAIDFVLSNAK) are mitochondrial intermembrane. The helical transmembrane segment at 30 to 47 (LVLGVGGAAMLGIATLAV) threads the bilayer. Topologically, residues 48 to 468 (KRMYDRALSA…SDPESLLRTV (421 aa)) are cytoplasmic. The tract at residues 50–196 (MYDRALSAPS…LSGSLYDDLQ (147 aa)) is dimerization. The interval 56 to 123 (SAPSSPTKAD…RGLARGGRPA (68 aa)) is disordered. Over residues 91 to 108 (QNVSRSLQTLPTSSSSFK) the composition is skewed to polar residues. Residues 161–170 (AALDICAELR) form an important for interaction with DNM1L region. 3 residues coordinate ADP: Ser-188, Ser-190, and His-202. The tract at residues 235–244 (RRENLEYFPR) is important for interaction with DNM1L. ADP-binding residues include Ser-344, Arg-346, and Lys-372.

The protein belongs to the MID49/MID51 family. Homodimer.

The protein localises to the mitochondrion outer membrane. In terms of biological role, mitochondrial outer membrane protein which regulates mitochondrial fission/fusion dynamics. Promotes the recruitment and association of the fission mediator dynamin-related protein 1 (DNM1L) to the mitochondrial surface independently of the mitochondrial fission FIS1 and MFF proteins. Regulates DNM1L GTPase activity and DNM1L oligomerization. The sequence is that of Mitochondrial dynamics protein MID51 (mief1) from Danio rerio (Zebrafish).